The following is a 665-amino-acid chain: Probable potassium transport system protein Kup 2 (665 aa).

13 helical membrane passes run 13–33 (GLLVSIGIVYGDIGTSPLYVM), 55–75 (ISLILWTITLLTTVKYVLIAL), 98–118 (WLVLPALIGGAALLADGTLTP), 138–158 (IPVPNQNSVLIITIIILLFLF), 167–187 (IIGKTFGPIMLIWFTFLGLTG), 195–215 (LSLLEALNPVLAVKILFSPAN), 217–237 (VGVLILGAVFLATTGAEALYS), 250–270 (SWPYVFICLALNYLGQGVWIL), 295–315 (FFAIILATLAAIIASQALITG), 344–364 (IFIPSINKMLCAATIGIVFLF), 375–395 (GLAITVTMLMTTILLFEYLSL), 400–420 (ILLRLVFLFLFGAIESMFLIS), and 428–448 (GGYVTVIIAAFIGAIMYIWYF).

It belongs to the HAK/KUP transporter (TC 2.A.72) family.

The protein resides in the cell membrane. It catalyses the reaction K(+)(in) + H(+)(in) = K(+)(out) + H(+)(out). In terms of biological role, transport of potassium into the cell. Likely operates as a K(+):H(+) symporter. In Lactobacillus johnsonii (strain CNCM I-12250 / La1 / NCC 533), this protein is Probable potassium transport system protein Kup 2.